The chain runs to 385 residues: Lipoyl synthase, mitochondrial (385 aa).

Cysteine 107, cysteine 112, cysteine 118, cysteine 137, cysteine 141, cysteine 144, and serine 352 together coordinate [4Fe-4S] cluster. Residues 122–341 (KKSEATATIM…RDTALKMGFL (220 aa)) enclose the Radical SAM core domain.

Belongs to the radical SAM superfamily. Lipoyl synthase family. [4Fe-4S] cluster serves as cofactor.

It localises to the mitochondrion. The catalysed reaction is [[Fe-S] cluster scaffold protein carrying a second [4Fe-4S](2+) cluster] + N(6)-octanoyl-L-lysyl-[protein] + 2 oxidized [2Fe-2S]-[ferredoxin] + 2 S-adenosyl-L-methionine + 4 H(+) = [[Fe-S] cluster scaffold protein] + N(6)-[(R)-dihydrolipoyl]-L-lysyl-[protein] + 4 Fe(3+) + 2 hydrogen sulfide + 2 5'-deoxyadenosine + 2 L-methionine + 2 reduced [2Fe-2S]-[ferredoxin]. The protein operates within protein modification; protein lipoylation via endogenous pathway; protein N(6)-(lipoyl)lysine from octanoyl-[acyl-carrier-protein]: step 2/2. In terms of biological role, catalyzes the radical-mediated insertion of two sulfur atoms into the C-6 and C-8 positions of the octanoyl moiety bound to the lipoyl domains of lipoate-dependent enzymes, thereby converting the octanoylated domains into lipoylated derivatives. The polypeptide is Lipoyl synthase, mitochondrial (Meyerozyma guilliermondii (strain ATCC 6260 / CBS 566 / DSM 6381 / JCM 1539 / NBRC 10279 / NRRL Y-324) (Yeast)).